The following is a 480-amino-acid chain: Ochratoxinase (480 aa).

Residues His-111, His-113, Lys-246, His-287, and His-307 each contribute to the Zn(2+) site. The active site involves Lys-246. Residue Asp-378 is part of the active site.

Belongs to the metallo-dependent hydrolases superfamily. Ochratoxinase amidase 2 family. Homooctamer. Requires Zn(2+) as cofactor.

It localises to the secreted. The enzyme catalyses ochratoxin A + H2O = ochratoxin alpha + L-phenylalanine. The Zn(2+)-specific chelator 1,10-phenanthroline inhibits the enzyme activity. Functionally, carboxypeptidase that catalyzes the release of a C-terminal amino acid with specific catalytic activity for aromatic amino acids such as phenylalanine. Is able to degrade ochratoxin A, one of the five major mycotoxins most harmful to humans and animals that is produced by Aspergillus and Penicillium species and occurs in a wide range of agricultural products. This Aspergillus niger (strain ATCC MYA-4892 / CBS 513.88 / FGSC A1513) protein is Ochratoxinase.